The sequence spans 223 residues: Uracil-DNA glycosylase (223 aa).

The active-site Proton acceptor is aspartate 67.

This sequence belongs to the uracil-DNA glycosylase (UDG) superfamily. UNG family.

The protein localises to the cytoplasm. The catalysed reaction is Hydrolyzes single-stranded DNA or mismatched double-stranded DNA and polynucleotides, releasing free uracil.. Functionally, excises uracil residues from the DNA which can arise as a result of misincorporation of dUMP residues by DNA polymerase or due to deamination of cytosine. This Borrelia duttonii (strain Ly) protein is Uracil-DNA glycosylase.